Reading from the N-terminus, the 116-residue chain is NADH-ubiquinone oxidoreductase chain 3 (116 aa).

The next 3 helical transmembrane spans lie at 10 to 30 (FLTLFVSILIFLITTLITFAA), 64 to 84 (FFLVAILFLLFDLEIALLFPL), and 88 to 108 (VFFHPIHTPLILTVGLIFEWV).

This sequence belongs to the complex I subunit 3 family.

The protein localises to the mitochondrion membrane. It carries out the reaction a ubiquinone + NADH + 5 H(+)(in) = a ubiquinol + NAD(+) + 4 H(+)(out). Functionally, core subunit of the mitochondrial membrane respiratory chain NADH dehydrogenase (Complex I) that is believed to belong to the minimal assembly required for catalysis. Complex I functions in the transfer of electrons from NADH to the respiratory chain. The immediate electron acceptor for the enzyme is believed to be ubiquinone. This Patiria pectinifera (Starfish) protein is NADH-ubiquinone oxidoreductase chain 3 (ND3).